Consider the following 125-residue polypeptide: Antitoxin MazE5 (125 aa).

Forms a complex with cognate toxin MazF5.

Antitoxin component of a type II toxin-antitoxin (TA) system. Upon expression in M.smegmatis neutralizes the effect of cognate toxin MazF5. The polypeptide is Antitoxin MazE5 (mazE5) (Mycobacterium tuberculosis (strain ATCC 25618 / H37Rv)).